A 103-amino-acid polypeptide reads, in one-letter code: MLGSIIGGIGSSLLGGLASGGISSLLNKMFSKMPEHAASSAGLTNGQGTIGMDTDAGIQSVIQGSNVPPAGQLPASNTSGVMADAGNMIRNAGRALLDGTIQA.

In terms of assembly, the virion is composed of 60 copies each of the F, G, and J proteins, and 12 copies of the H protein. There are 12 spikes which are each composed of 5 G and one H proteins.

The protein localises to the virion. In terms of biological role, minor spike component of the viral shell. Involved in the ejection of the phage DNA in the host and is injected with the DNA in the periplasmic space of the host. Involved in the determination of the phage host-range. The protein is Minor spike protein (H) of Escherichia coli (strain K12) (Bacteriophage St-1).